Consider the following 185-residue polypeptide: Ribosome-recycling factor (185 aa).

This sequence belongs to the RRF family.

It localises to the cytoplasm. In terms of biological role, responsible for the release of ribosomes from messenger RNA at the termination of protein biosynthesis. May increase the efficiency of translation by recycling ribosomes from one round of translation to another. The chain is Ribosome-recycling factor from Pseudomonas putida (strain GB-1).